A 390-amino-acid polypeptide reads, in one-letter code: Phosphoglycerate kinase (390 aa).

Substrate-binding positions include 21-23 (DMN), arginine 36, 59-62 (HLGR), arginine 113, and arginine 146. Residues lysine 197, glutamate 319, and 345-348 (GGDT) contribute to the ATP site.

Belongs to the phosphoglycerate kinase family. Monomer.

It is found in the cytoplasm. It catalyses the reaction (2R)-3-phosphoglycerate + ATP = (2R)-3-phospho-glyceroyl phosphate + ADP. It participates in carbohydrate degradation; glycolysis; pyruvate from D-glyceraldehyde 3-phosphate: step 2/5. This is Phosphoglycerate kinase from Laribacter hongkongensis (strain HLHK9).